We begin with the raw amino-acid sequence, 521 residues long: 2,3-bisphosphoglycerate-independent phosphoglycerate mutase 2 (521 aa).

Positions 20 and 70 each coordinate Mn(2+). Ser70 (phosphoserine intermediate) is an active-site residue. Substrate contacts are provided by residues His131, 161–162 (RD), Arg193, Arg199, 270–273 (RPDR), and Lys343. Residues Asp410, His414, Asp451, His452, and His470 each coordinate Mn(2+).

The protein belongs to the BPG-independent phosphoglycerate mutase family. Requires Mn(2+) as cofactor.

It catalyses the reaction (2R)-2-phosphoglycerate = (2R)-3-phosphoglycerate. It participates in carbohydrate degradation; glycolysis; pyruvate from D-glyceraldehyde 3-phosphate: step 3/5. In terms of biological role, catalyzes the interconversion of 2-phosphoglycerate and 3-phosphoglycerate. In Methanosarcina acetivorans (strain ATCC 35395 / DSM 2834 / JCM 12185 / C2A), this protein is 2,3-bisphosphoglycerate-independent phosphoglycerate mutase 2.